The sequence spans 103 residues: Large ribosomal subunit protein bL21 (103 aa).

It belongs to the bacterial ribosomal protein bL21 family. Part of the 50S ribosomal subunit. Contacts protein L20.

In terms of biological role, this protein binds to 23S rRNA in the presence of protein L20. This Haemophilus influenzae (strain ATCC 51907 / DSM 11121 / KW20 / Rd) protein is Large ribosomal subunit protein bL21.